Reading from the N-terminus, the 197-residue chain is Surfactant protein C (197 aa).

A propeptide spanning residues 1–23 is cleaved from the precursor; the sequence is MDVGSKEVLMESPPDYSAAPRGR. S-palmitoyl cysteine attachment occurs at residues Cys-28 and Cys-29. A propeptide spanning residues 59-197 is cleaved from the precursor; it reads HMSQKHTEMV…LCGEVPLYYI (139 aa). The BRICHOS domain maps to 94-197; the sequence is FSIGSTGLVV…LCGEVPLYYI (104 aa). Disulfide bonds link Cys-120–Cys-148 and Cys-121–Cys-189.

It is found in the secreted. The protein resides in the extracellular space. The protein localises to the surface film. Pulmonary surfactant associated proteins promote alveolar stability by lowering the surface tension at the air-liquid interface in the peripheral air spaces. This Homo sapiens (Human) protein is Surfactant protein C.